The primary structure comprises 443 residues: Glutamyl-tRNA reductase (443 aa).

Residues 55-58 (TCNR), serine 113, 118-120 (EPQ), and glutamine 124 each bind substrate. Residue cysteine 56 is the Nucleophile of the active site. An NADP(+)-binding site is contributed by 193-198 (GAGEMI).

The protein belongs to the glutamyl-tRNA reductase family. Homodimer.

It catalyses the reaction (S)-4-amino-5-oxopentanoate + tRNA(Glu) + NADP(+) = L-glutamyl-tRNA(Glu) + NADPH + H(+). The protein operates within porphyrin-containing compound metabolism; protoporphyrin-IX biosynthesis; 5-aminolevulinate from L-glutamyl-tRNA(Glu): step 1/2. Its pathway is porphyrin-containing compound metabolism; chlorophyll biosynthesis. In terms of biological role, catalyzes the NADPH-dependent reduction of glutamyl-tRNA(Glu) to glutamate 1-semialdehyde (GSA). This Methylibium petroleiphilum (strain ATCC BAA-1232 / LMG 22953 / PM1) protein is Glutamyl-tRNA reductase.